Consider the following 80-residue polypeptide: Sulfur carrier protein TusA (80 aa).

Catalysis depends on cysteine 17, which acts as the Cysteine persulfide intermediate.

It belongs to the sulfur carrier protein TusA family.

The protein localises to the cytoplasm. Sulfur carrier protein which probably makes part of a sulfur-relay system. In Pseudomonas entomophila (strain L48), this protein is Sulfur carrier protein TusA.